The following is a 1011-amino-acid chain: Protein argonaute 1C (1011 aa).

Positions 1–11 are enriched in basic residues; that stretch reads MASRRPTHRHH. Disordered regions lie at residues 1-95 and 107-147; these read MASR…SPLA and RPSE…PLRP. Composition is skewed to low complexity over residues 28–53 and 61–92; these read ARYA…ARGA and QQQQ…ASSS. The span at 127 to 140 shows a compositional bias: polar residues; the sequence is ATTTPHHIPSSSKS. Residues 352–462 enclose the PAZ domain; it reads PVIDFVAQLL…LPMEVCKIVE (111 aa). A Piwi domain is found at 638–959; sequence LLIGILPDNN…AAFRARFYME (322 aa). Over residues 963–982 the composition is skewed to low complexity; it reads SDSSSVVSGPGVRGPLSGSS. The interval 963 to 994 is disordered; it reads SDSSSVVSGPGVRGPLSGSSTSRTRAPGGAAV.

This sequence belongs to the argonaute family. Ago subfamily.

Functionally, probably involved in the RNA silencing pathway. May bind to short RNAs such as microRNAs (miRNAs) or short interfering RNAs (siRNAs), and represses the translation of mRNAs which are complementary to them. This chain is Protein argonaute 1C (AGO1C), found in Oryza sativa subsp. japonica (Rice).